Consider the following 279-residue polypeptide: Phosphatidylglycerol--prolipoprotein diacylglyceryl transferase (279 aa).

The next 3 helical transmembrane spans lie at 18-38 (LSVR…YFVA), 55-75 (IIFY…VIFQ), and 89-109 (IWHG…AGVI). R137 provides a ligand contact to a 1,2-diacyl-sn-glycero-3-phospho-(1'-sn-glycerol). The next 2 helical transmembrane spans lie at 203 to 223 (LGET…FIEG) and 235 to 255 (IRVA…LIVY).

It belongs to the Lgt family.

The protein localises to the cell membrane. The enzyme catalyses L-cysteinyl-[prolipoprotein] + a 1,2-diacyl-sn-glycero-3-phospho-(1'-sn-glycerol) = an S-1,2-diacyl-sn-glyceryl-L-cysteinyl-[prolipoprotein] + sn-glycerol 1-phosphate + H(+). The protein operates within protein modification; lipoprotein biosynthesis (diacylglyceryl transfer). In terms of biological role, catalyzes the transfer of the diacylglyceryl group from phosphatidylglycerol to the sulfhydryl group of the N-terminal cysteine of a prolipoprotein, the first step in the formation of mature lipoproteins. The chain is Phosphatidylglycerol--prolipoprotein diacylglyceryl transferase from Staphylococcus aureus (strain bovine RF122 / ET3-1).